Consider the following 584-residue polypeptide: Isopropyl malate synthase htyA (584 aa).

Residues 39-317 form the Pyruvate carboxyltransferase domain; it reads PIWLSTDLRD…ETGLDFSNLP (279 aa).

It belongs to the alpha-IPM synthase/homocitrate synthase family. LeuA type 2 subfamily.

It catalyses the reaction 3-methyl-2-oxobutanoate + acetyl-CoA + H2O = (2S)-2-isopropylmalate + CoA + H(+). Its pathway is antifungal biosynthesis. In terms of biological role, isopropyl malate synthase; part of the gene cluster that mediates the de novo generation of L-homotyrosine from acetyl-CoA and 4-hydroxyphenyl-pyruvate. L-homotyrosine is a building block of echinocandin B, a fungal lipidated cyclic hexapeptide that acts as an antifungal agent. L-homotyrosine 4-hydroxyphenyl-pyruvate first undergoes an aldol-type condensation by htyA with the C-2 of acetyl-CoA followed by the release of CoA to form 2-(4-hydroxybenzyl)-malate. This is followed by isomerization of 2-(4-hydroxy-benzyl)-malate to 3-(4-hydroxybenzyl)-malate by htyD. Thereafter, 3-(4-hydroxybenzyl)-malate undergoes decarboxylation and oxidation to form 2-oxo-4-(4-hydroxybenzyl)butanoic acid, coupled to reduction of NAD(+) to NADH by htyC. The product then undergoes transamination catalyzed by htyB to form L-homotyrosine. The protein is Isopropyl malate synthase htyA of Aspergillus rugulosus (Emericella rugulosa).